Here is a 150-residue protein sequence, read N- to C-terminus: UPF0756 membrane protein YE1142 (150 aa).

The next 4 helical transmembrane spans lie at 1–21 (MAALDPTLLILLVLAGLGIIS), 51–71 (YGLTIGILILTIGVMTPIASG), 88–108 (ILAIVVGVAVSWLGGRGVSLM), and 114–134 (VVAGLLVGTVLGVALFRGVPV).

This sequence belongs to the UPF0756 family.

The protein localises to the cell membrane. This is UPF0756 membrane protein YE1142 from Yersinia enterocolitica serotype O:8 / biotype 1B (strain NCTC 13174 / 8081).